The primary structure comprises 531 residues: Bifunctional aspartate aminotransferase and L-aspartate beta-decarboxylase (531 aa).

2 residues coordinate L-aspartate: G114 and N255. K314 carries the N6-(pyridoxal phosphate)lysine modification. Position 496 (R496) interacts with L-aspartate.

It belongs to the class-I pyridoxal-phosphate-dependent aminotransferase family. In terms of assembly, homododecamer. Pyridoxal 5'-phosphate serves as cofactor.

The enzyme catalyses L-aspartate + H(+) = L-alanine + CO2. It carries out the reaction L-aspartate + 2-oxoglutarate = oxaloacetate + L-glutamate. With respect to regulation, inhibited by 10 mM Co(2+), Mn(2+) and Ni(2+), and by 1 mM Cu(2+) and Hg(2+). Its function is as follows. Bifunctional enzyme that has both L-aspartate decarboxylase and transaminase activity. Has high activity with L-aspartate, and much lower activity with D-aspartate, L-lysine and L-glutamine. This is Bifunctional aspartate aminotransferase and L-aspartate beta-decarboxylase from Pseudomonas sp.